Here is a 441-residue protein sequence, read N- to C-terminus: Interferon-related developmental regulator 2 (441 aa).

Basic residues predominate over residues 1–15 (MPRARKGNTPRKGGQ). The tract at residues 1-72 (MPRARKGNTP…TVDEQGPQED (72 aa)) is disordered. Residues 63–72 (TVDEQGPQED) are compositionally biased toward acidic residues.

The protein belongs to the IFRD family. Associates with ribosomes; promoting ribosome inactivation.

Its function is as follows. Ribosome-binding protein that acts as an inhibitor of mRNA translation by promoting ribosome inactivation. Associates with the P- and E-sites of the ribosome and inserts a C-terminal helix into the mRNA exit channel to preclude translation. The protein is Interferon-related developmental regulator 2 of Oryctolagus cuniculus (Rabbit).